We begin with the raw amino-acid sequence, 366 residues long: MKKILLTCLLASASFQVSSHTSEVLSGYWAYQEFLEKFPQQGVLTRELSEVVRNAPVPLKRHQSKPIRISVVFPGQQISDYWVRNLSAFEKRMDKLQISYQINQVFTRPNADVKQQSVSLMEALKSKSDYLIFTLDTTRHRKFIEHVLDSSETKLILQNITTPVQAWDKRQPFLYVGFDHAEGSIALADKFKQLYPQGANYSVLYFSEGYVSDARGDTFIHQMNHSDRFALKSSFYTKATKASGYESAKNSLERYPDVDFIYACSTDVALGAIDALKELGRTNIKINGWGGGSAELDAIAAGDLDLTVMRMNDDTGIAMAEAIKWDIEGRTVPTVFSGDFEVVTKEDSPEHIELLKKRAFRYSDQP.

An N-terminal signal peptide occupies residues 1-13 (MKKILLTCLLASA).

Belongs to the bacterial solute-binding protein 2 family.

Its subcellular location is the periplasm. Functionally, binds to an autoinducer molecule. This complex then interacts with the LuxQ sensor protein. This chain is Autoinducer 2-binding periplasmic protein LuxP (luxP), found in Vibrio vulnificus (strain CMCP6).